A 352-amino-acid polypeptide reads, in one-letter code: Sortase SrtE1 (352 aa).

Basic and acidic residues-rich tracts occupy residues 1–10 (MTALRPERDS) and 34–45 (RYEESAAGEENR). Residues 1–132 (MTALRPERDS…RQARARKPGA (132 aa)) form a disordered region. At 1–139 (MTALRPERDS…PGAAVVASRA (139 aa)) the chain is on the cytoplasmic side. A required for protein stability region spans residues 15 to 79 (DQGSSYGQPY…TGPIGGGPDG (65 aa)). The span at 71-82 (GPIGGGPDGGGR) shows a compositional bias: gly residues. Positions 83–97 (AARRKAAKRRHGRRG) are enriched in basic residues. Residues 140 to 160 (IGEIFITTGVLMLLFVTYQLW) traverse the membrane as a helical segment. Over 161–352 (WTNVRAHAQA…SKGKPDALVS (192 aa)) the chain is Extracellular. Catalysis depends on residues histidine 251 and cysteine 320. Arginine 329 (proton donor) is an active-site residue.

This sequence belongs to the bacterial sortase family. Class E subfamily.

Its subcellular location is the cell membrane. It carries out the reaction The enzyme catalyzes a cell wall sorting reaction in which a surface protein with a sorting signal containing a LPXTG motif is cleaved between the Thr and Gly residue. The resulting threonine carboxyl end of the protein is covalently attached to a pentaglycine cross-bridge of peptidoglycan.. Transpeptidase that anchors surface proteins to the cell wall. Recognizes both Leu-Ala-x-Thr-Gly and Leu-Pro-x-Thr-Gly, with a preference for the former. Unlike the S.aureus sortase it cleaves not only the Thr-Gly motif but also the Ala-X bond; Ala-Glu and Ala-His bonds are better substrates than the Thr-Gly motif in vitro. Among its possible substrates are the chaplins ChpA, ChpB and ChpC; this enzyme is less important for ChpC attachment than is SrtE2. A double knockout mutant of srtE1 and srtE2 shows a developmental defect in aerial hyphae formation more dramatic than that due to chaplin deletion. The protein is Sortase SrtE1 of Streptomyces coelicolor (strain ATCC BAA-471 / A3(2) / M145).